The sequence spans 333 residues: Bifunctional phosphoglucose/phosphomannose isomerase (333 aa).

In terms of domain architecture, SIS spans 22–160 (LEGALEGVEE…SGALGVDLEA (139 aa)). 6 residues coordinate D-fructose 6-phosphate: glycine 39, serine 40, serine 84, serine 86, threonine 89, and arginine 136. The active-site Proton acceptor is the glutamate 211. The D-fructose 6-phosphate site is built by histidine 227 and lysine 322. Histidine 227 functions as the Proton donor in the catalytic mechanism. Lysine 322 (proton acceptor) is an active-site residue.

Belongs to the PGI/PMI family. Homodimer.

The catalysed reaction is alpha-D-glucose 6-phosphate = beta-D-fructose 6-phosphate. It carries out the reaction D-mannose 6-phosphate = D-fructose 6-phosphate. With respect to regulation, inhibited by low concentrations of erythrose 4-phosphate and 6-phosphogluconate. Dual specificity isomerase that catalyzes the isomerization of both glucose-6-phosphate and mannose-6-phosphate to fructose-6-phosphate with similar catalytic efficiency. The polypeptide is Bifunctional phosphoglucose/phosphomannose isomerase (Aeropyrum pernix (strain ATCC 700893 / DSM 11879 / JCM 9820 / NBRC 100138 / K1)).